The sequence spans 635 residues: PTS system fructose-specific EIIABC component (635 aa).

The PTS EIIA type-2 domain maps to 5–149 (ELLTKHTIKL…DAIIDIINQH (145 aa)). His67 acts as the Tele-phosphohistidine intermediate; for EIIA activity in catalysis. Position 67 is a phosphohistidine; by HPr (His67). The tract at residues 149 to 168 (HDKDDDEEEEEEEAAPAPAG) is disordered. Positions 152 to 162 (DDDEEEEEEEA) are enriched in acidic residues. Residues 172 to 267 (ILAVTACPTG…PQELIEKAMN (96 aa)) enclose the PTS EIIB type-2 domain. The active-site Phosphocysteine intermediate; for EIIB activity is the Cys178. Cys178 is subject to Phosphocysteine; by EIIA. Positions 273–293 (YQGSGGGSAASNDDEEAKGKS) are disordered. A PTS EIIC type-2 domain is found at 301–635 (FYKHLMSGVS…GIVKKPVTEK (335 aa)). Transmembrane regions (helical) follow at residues 312 to 332 (MLPFVVGGGILVAISFFWGIH), 350 to 370 (FIGGDNALKLIVAVLAGFIAM), 392 to 412 (NAGFLGGLIAGFLAGYVVILL), 428 to 448 (PVLIYPLFGIFITGVLMQFVV), 470 to 490 (NLVLMGIILGGMMAIDMGGPL), 511 to 531 (AAIMAGGMVPPLGIALATTIF), 544 to 564 (ITCYFMGAAFVTEGAIPFAAA), 569 to 589 (VIPAAVVGAAVAGGLTEFFRV), and 608 to 628 (MLYLLSIVIGAVVMAIILGIV).

It is found in the cell membrane. The catalysed reaction is D-fructose(out) + N(pros)-phospho-L-histidyl-[protein] = D-fructose 1-phosphate(in) + L-histidyl-[protein]. Its function is as follows. The phosphoenolpyruvate-dependent sugar phosphotransferase system (sugar PTS), a major carbohydrate active transport system, catalyzes the phosphorylation of incoming sugar substrates concomitantly with their translocation across the cell membrane. This system is involved in fructose transport. This Bacillus subtilis (strain 168) protein is PTS system fructose-specific EIIABC component (fruA).